The following is a 621-amino-acid chain: GPI-anchor transamidase component GPAA1 (621 aa).

At Met-1 to Arg-19 the chain is on the cytoplasmic side. A helical transmembrane segment spans residues Leu-20 to Phe-41. Over Pro-42–Ser-370 the chain is Lumenal. Tyr-49 and Ser-51 together coordinate a 2-acyl-6-[6-phosphoethanolamine-alpha-D-mannosyl-(1-&gt;2)-6-phosphoethanolamine-alpha-D-mannosyl-(1-&gt;6)-2-phosphoethanolamine-alpha-D-mannosyl-(1-&gt;4)-alpha-D-glucosaminyl]-1-(1-radyl,2-acyl-sn-glycero-3-phospho)-1D-myo-inositol. Asn-203 is a glycosylation site (N-linked (GlcNAc...) asparagine). A disulfide bridge links Cys-259 with Cys-266. His-354, Gln-355, and Ser-356 together coordinate a 2-acyl-6-[6-phosphoethanolamine-alpha-D-mannosyl-(1-&gt;2)-6-phosphoethanolamine-alpha-D-mannosyl-(1-&gt;6)-2-phosphoethanolamine-alpha-D-mannosyl-(1-&gt;4)-alpha-D-glucosaminyl]-1-(1-radyl,2-acyl-sn-glycero-3-phospho)-1D-myo-inositol. A Mg(2+)-binding site is contributed by Gln-355. A helical transmembrane segment spans residues Ile-371–Trp-393. Residues Met-394–Ala-425 lie on the Cytoplasmic side of the membrane. A helical transmembrane segment spans residues Ser-426–His-450. Residues Leu-451–Glu-462 are Lumenal-facing. Residues Ala-463–His-483 form a helical membrane-spanning segment. The Cytoplasmic portion of the chain corresponds to Arg-484–Trp-495. Transmembrane regions (helical) follow at residues Met-496 to Ser-519 and Leu-520 to Lys-536. Residues Pro-537–Pro-540 lie on the Cytoplasmic side of the membrane. The chain crosses the membrane as a helical span at residues Arg-541–Leu-563. The Lumenal segment spans residues Trp-564–Ala-597. Residues Leu-598–Phe-619 traverse the membrane as a helical segment. The Cytoplasmic portion of the chain corresponds to Trp-620 to Lys-621.

Heteropentamer. Part of the GPI-anchor transamidase complex, consisting of PIGK, PIGT, PIGS, PIGU and GAA1. Interacts with PIGK. In terms of tissue distribution, ubiquitously expressed in fetal and adult tissues. Expressed at higher levels in fetal tissues than adult tissues. In embryos abundant in the choroid plexus, skeletal muscle,.

It localises to the endoplasmic reticulum membrane. Its pathway is glycolipid biosynthesis; glycosylphosphatidylinositol-anchor biosynthesis. Functionally, component of the glycosylphosphatidylinositol-anchor (GPI-anchor) transamidase (GPI-T) complex that catalyzes the formation of the linkage between a proprotein and a GPI-anchor and participates in GPI anchored protein biosynthesis. Binds GPI-anchor. The chain is GPI-anchor transamidase component GPAA1 from Mus musculus (Mouse).